A 574-amino-acid polypeptide reads, in one-letter code: MPYSEIEAKFLGPGKELTREPCYKKLKSAVDDGVFPHRGGPDSHRIQEKTKNNRLPVATINFRRRVCPGEDKTSTDVLKPLHKEMPGDKVGGTESIGSQALQDGKPLAPARDDEIYSTSKAFIGPIYKPPEKKKCRERKNETATFNNTDSKRRQEEKQKFNSKKLEIDTELSQFYKEIEELENENEASQGSCKEPEPSQEQTLSHDQACNTLKPEGESKDLSTVLQSHCGYQPYLEDESDYPCDEQLIPAFCDTSFPSFRPEWQSVHPFVIPHDPLPSFNYFNIQRFGAPLHPPPSVFHARDDARLQSGCYIDSYQDGWSCLTLDQNDEYANYDVPGNVHPFGNGYGVQDDSVKNGFCEIRECWQDPSMDMHNEADRFVNQCFQEDRLNKLQKLLILLRGLPGSGKTTLSRILLGQSRDGIVFSTDDYFHHQDGYRYNVNQLGDAHDWNQNRAKQAIDQGRSPVIIDNTNTQAWEMKPYVEMAIGKGYRVEFHEPETWWKFDPEELEKRNKHGVSRKKIAQMLDRYEFQMSISIVMNSVEPTQKSTQTPLPLQGDQRWGGSLGSHSQVSITDDY.

4 disordered regions span residues 82–110 (HKEMPGDKVGGTESIGSQALQDGKPLAPA), 127–161 (YKPPEKKKCRERKNETATFNNTDSKRRQEEKQKFN), 182–204 (ENENEASQGSCKEPEPSQEQTLS), and 542–574 (TQKSTQTPLPLQGDQRWGGSLGSHSQVSITDDY). 2 stretches are compositionally biased toward basic and acidic residues: residues 129-141 (PPEKKKCRERKNE) and 149-161 (DSKRRQEEKQKFN). Positions 162 to 196 (SKKLEIDTELSQFYKEIEELENENEASQGSCKEPE) form a coiled coil. A compositionally biased stretch (polar residues) spans 563-574 (GSHSQVSITDDY).

In Rattus norvegicus (Rat), this protein is NEDD4-binding protein 2-like 2 (N4bp2l2).